The following is a 223-amino-acid chain: MACSGFQSHGAWLELTSRTWPCTALFSLLFIPVFSKGMHVAQPAVVLANSRGVASFVCEYGSAGKAAEVRVTVLRRAGSQMTEVCAATYTVEDELTFLDDSTCTGTSTENKVNLTIQGLRAVDTGLYICKVELLYPPPYYVGMGNGTQIYVIDPEPCPDSDFLLWILAAVSSGLFFYSFLITAVSLSKMLKKRSPLTTGVYVKMPPTEPECEKQFQPYFIPIN.

A signal peptide spans 1 to 35 (MACSGFQSHGAWLELTSRTWPCTALFSLLFIPVFS). Residues 38 to 161 (MHVAQPAVVL…IDPEPCPDSD (124 aa)) lie on the Extracellular side of the membrane. Residues 39-140 (HVAQPAVVLA…VELLYPPPYY (102 aa)) enclose the Ig-like V-type domain. Residues 46 to 50 (VLANS) are homodimerization. 2 cysteine pairs are disulfide-bonded: C58–C129 and C85–C103. An N-linked (GlcNAc...) asparagine glycan is attached at N113. The important for interaction with CD80 and CD86 stretch occupies residues 134–139 (LYPPPY). Residue N145 is glycosylated (N-linked (GlcNAc...) asparagine). The tract at residues 150–155 (YVIDPE) is homodimerization. Residues 162 to 182 (FLLWILAAVSSGLFFYSFLIT) traverse the membrane as a helical segment. The Cytoplasmic segment spans residues 183–223 (AVSLSKMLKKRSPLTTGVYVKMPPTEPECEKQFQPYFIPIN). Position 201 is a phosphotyrosine; by TXK and JAK2 (Y201).

As to quaternary structure, homodimer; disulfide-linked. Binds to CD80/B7-1 and CD86/B7.2. Interacts with ICOSLG. N-glycosylation is important for dimerization. Post-translationally, phosphorylation at Tyr-201 prevents binding to the AP-2 adapter complex, blocks endocytosis, and leads to retention of CTLA4 on the cell surface.

It is found in the cell membrane. Functionally, inhibitory receptor acting as a major negative regulator of T-cell responses. The affinity of CTLA4 for its natural B7 family ligands, CD80 and CD86, is considerably stronger than the affinity of their cognate stimulatory coreceptor CD28. The sequence is that of Cytotoxic T-lymphocyte protein 4 (CTLA4) from Sus scrofa (Pig).